The primary structure comprises 426 residues: Tyrosine--tRNA ligase (426 aa).

Position 35 (tyrosine 35) interacts with L-tyrosine. The short motif at 40-49 is the 'HIGH' region element; it reads PTAPSLHIGH. Tyrosine 174 and glutamine 178 together coordinate L-tyrosine. The 'KMSKS' region signature appears at 234–238; sequence KFGKT. Lysine 237 serves as a coordination point for ATP. Residues 358–418 form the S4 RNA-binding domain; that stretch reads PRVVDALVAT…WAVIRRGRRA (61 aa).

The protein belongs to the class-I aminoacyl-tRNA synthetase family. TyrS type 1 subfamily. In terms of assembly, homodimer.

The protein localises to the cytoplasm. The catalysed reaction is tRNA(Tyr) + L-tyrosine + ATP = L-tyrosyl-tRNA(Tyr) + AMP + diphosphate + H(+). Functionally, catalyzes the attachment of tyrosine to tRNA(Tyr) in a two-step reaction: tyrosine is first activated by ATP to form Tyr-AMP and then transferred to the acceptor end of tRNA(Tyr). The protein is Tyrosine--tRNA ligase of Acidothermus cellulolyticus (strain ATCC 43068 / DSM 8971 / 11B).